The following is an 83-amino-acid chain: Scyreptin (83 aa).

Its function is as follows. cationic antimicrobial peptide that exhibits a potent and broad-spectrum antimicrobial activity against both bacteria and fungi, as well as against the multidrug-resistant bacteria P.aeruginosa. Exhibits rapid bactericidal kinetic. Acts by destroying the integrity of bacterial membranes, leading to bacterial death. Also exhibits potent anti-biofilm activity against P.aeruginosa. Shows high thermal stability and ion tolerance, as it maintains antibacterial activity even when heated to 100 degrees Celsius for 30 minutes and in presence of high levels of NaCl, CaCl(2) and MgCl(2). Does not show cytotoxicity and hemolytic activity. In a mouse model of burn infection, exhibits a remarkably reduction in the bacterial load caused by multidrug-resistant P.aeruginosa at the site of infection, and promotes wound healing. In Scylla paramamosain (Mud crab), this protein is Scyreptin.